A 355-amino-acid chain; its full sequence is Tetraacyldisaccharide 4'-kinase (355 aa).

49–56 (TAGGTGKT) lines the ATP pocket.

It belongs to the LpxK family.

The enzyme catalyses a lipid A disaccharide + ATP = a lipid IVA + ADP + H(+). The protein operates within glycolipid biosynthesis; lipid IV(A) biosynthesis; lipid IV(A) from (3R)-3-hydroxytetradecanoyl-[acyl-carrier-protein] and UDP-N-acetyl-alpha-D-glucosamine: step 6/6. Its function is as follows. Transfers the gamma-phosphate of ATP to the 4'-position of a tetraacyldisaccharide 1-phosphate intermediate (termed DS-1-P) to form tetraacyldisaccharide 1,4'-bis-phosphate (lipid IVA). This chain is Tetraacyldisaccharide 4'-kinase, found in Chlorobium luteolum (strain DSM 273 / BCRC 81028 / 2530) (Pelodictyon luteolum).